A 775-amino-acid polypeptide reads, in one-letter code: Acetamidase regulatory protein (775 aa).

A compositionally biased stretch (polar residues) spans 1-15 (MSSTAHNSQPSTGNG). Residues 1-20 (MSSTAHNSQPSTGNGVTKRK) form a disordered region. A DNA-binding region (zn(2)-C6 fungal-type) is located at residues 26–59 (CIHCHRRKVRCDARIVGLPCSNCRSAGKADCRIH). Polar residues predominate over residues 126 to 153 (PHSSYTNGNHLSNNRGSQPITETQTFTR). 2 disordered regions span residues 126-159 (PHSS…GADR) and 630-699 (ATSE…HQNQ). Over residues 630–644 (ATSERPRRFSTHDQN) the composition is skewed to basic and acidic residues. The segment covering 674 to 689 (PRPPYEVPTPESPRMP) has biased composition (pro residues).

It localises to the nucleus. Functionally, positively regulates the expression of genes involved in the catabolism of certain amides, omega amino acids, and lactams. In Aspergillus oryzae (strain ATCC 42149 / RIB 40) (Yellow koji mold), this protein is Acetamidase regulatory protein (amdR).